Reading from the N-terminus, the 531-residue chain is 2,3-bisphosphoglycerate-independent phosphoglycerate mutase (531 aa).

Mn(2+) contacts are provided by D13 and S63. The Phosphoserine intermediate role is filled by S63. Substrate-binding positions include H124, R154–D155, R187, R193, R261–R264, and K342. Mn(2+) is bound by residues D420, H424, D462, H463, and H480.

It belongs to the BPG-independent phosphoglycerate mutase family. As to quaternary structure, monomer. Requires Mn(2+) as cofactor.

It catalyses the reaction (2R)-2-phosphoglycerate = (2R)-3-phosphoglycerate. The protein operates within carbohydrate degradation; glycolysis; pyruvate from D-glyceraldehyde 3-phosphate: step 3/5. In terms of biological role, catalyzes the interconversion of 2-phosphoglycerate and 3-phosphoglycerate. This chain is 2,3-bisphosphoglycerate-independent phosphoglycerate mutase, found in Mycoplasma mycoides subsp. mycoides SC (strain CCUG 32753 / NCTC 10114 / PG1).